A 443-amino-acid polypeptide reads, in one-letter code: Probable glucomannan 4-beta-mannosyltransferase 11 (443 aa).

Residue aspartate 52 is part of the active site. Substrate contacts are provided by aspartate 111 and aspartate 113. Aspartate 205 is a catalytic residue. The next 4 helical transmembrane spans lie at isoleucine 284–phenylalanine 304, isoleucine 321–leucine 341, glutamate 400–threonine 420, and valine 421–isoleucine 441.

Belongs to the glycosyltransferase 2 family. Plant cellulose synthase-like A subfamily.

The protein localises to the golgi apparatus membrane. It carries out the reaction GDP-mannose + (glucomannan)n = GDP + (glucomannan)n+1.. In terms of biological role, probable mannan synthase which consists of a 4-beta-mannosyltransferase activity on mannan using GDP-mannose. The beta-1,4-mannan product is the backbone for galactomannan synthesis by galactomannan galactosyltransferase. Galactomannan is a noncellulosic polysaccharides of plant cell wall. The protein is Probable glucomannan 4-beta-mannosyltransferase 11 of Arabidopsis thaliana (Mouse-ear cress).